A 129-amino-acid polypeptide reads, in one-letter code: Procyclic form-specific polypeptide A-beta (129 aa).

Residues 1-27 (MAPRSLYLLAVLLFSANLFAGVGFAAA) form the signal peptide. The tract at residues 27-111 (AAEGPEDKGL…PEPEPGAATL (85 aa)) is disordered. The segment covering 53–104 (DDTNGTDPDPEPEPEPEPEPEPEPEPEPEPEPEPEPEPEPEPEPEPEPEPEP) has biased composition (acidic residues). N-linked (GlcNAc...) asparagine glycosylation occurs at N56. A run of 24 repeats spans residues 59-60 (DP), 61-62 (DP), 63-64 (EP), 65-66 (EP), 67-68 (EP), 69-70 (EP), 71-72 (EP), 73-74 (EP), 75-76 (EP), 77-78 (EP), 79-80 (EP), 81-82 (EP), 83-84 (EP), 85-86 (EP), 87-88 (EP), 89-90 (EP), 91-92 (EP), 93-94 (EP), 95-96 (EP), 97-98 (EP), 99-100 (EP), 101-102 (EP), 103-104 (EP), and 105-106 (EP). A 24 X 2 AA tandem repeats of [DE]-P region spans residues 59 to 106 (DPDPEPEPEPEPEPEPEPEPEPEPEPEPEPEPEPEPEPEPEPEPEPEP). G107 carries the GPI-anchor amidated glycine lipid modification. Residues 108 to 129 (AATLKSVALPFAIAAVGLVAAF) constitute a propeptide that is removed on maturation.

Its subcellular location is the cell membrane. Functionally, major surface antigen of procyclic forms. This chain is Procyclic form-specific polypeptide A-beta (PARPA-BETA), found in Trypanosoma brucei brucei.